We begin with the raw amino-acid sequence, 290 residues long: uncharacterized protein (290 aa).

Disordered regions lie at residues 17–91 and 220–259; these read QTIS…EKNS and DKAS…QMPN. Polar residues predominate over residues 40 to 50; it reads NITTHLSTGNL. Positions 66 to 83 are enriched in basic residues; it reads STKKGKRVSKPGTKKKEK. The segment covering 233-249 has biased composition (basic and acidic residues); that stretch reads EGEKDGNAEQGKQKEVQ.

This is an uncharacterized protein from Saccharomyces cerevisiae (strain ATCC 204508 / S288c) (Baker's yeast).